The primary structure comprises 349 residues: Phosphoribosylformylglycinamidine cyclo-ligase (349 aa).

This sequence belongs to the AIR synthase family.

The protein resides in the cytoplasm. The enzyme catalyses 2-formamido-N(1)-(5-O-phospho-beta-D-ribosyl)acetamidine + ATP = 5-amino-1-(5-phospho-beta-D-ribosyl)imidazole + ADP + phosphate + H(+). It participates in purine metabolism; IMP biosynthesis via de novo pathway; 5-amino-1-(5-phospho-D-ribosyl)imidazole from N(2)-formyl-N(1)-(5-phospho-D-ribosyl)glycinamide: step 2/2. The protein is Phosphoribosylformylglycinamidine cyclo-ligase of Jannaschia sp. (strain CCS1).